Reading from the N-terminus, the 469-residue chain is Histone chaperone rtt-106 (469 aa).

Disordered regions lie at residues 54 to 73 (EEPATKRRRVEAQTSGPNGA) and 364 to 469 (MAEQ…EGEE). 2 stretches are compositionally biased toward basic and acidic residues: residues 364–379 (MAEQRKAKKQLAENAK) and 402–415 (ELERAQKEEEQRLQ). Acidic residues-rich tracts occupy residues 416–433 (DEEDEEEEDYDPGSEGES) and 440–469 (SEEEEEEEDGEGEGDEDDDEDMGEGLEGEE).

This sequence belongs to the RTT106 family. As to quaternary structure, interacts with histones H3 and H4.

Its subcellular location is the nucleus. The protein localises to the chromosome. Histones H3 and H4 chaperone involved in the nucleosome formation and heterochromatin silencing. Required for the deposition of H3K56ac-carrying H3-H4 complex onto newly-replicated DNA. Plays a role in the transcriptional regulation of the cell-cycle dependent histone genes by creating a repressive structure at the core histone gene promoter. In Neurospora crassa (strain ATCC 24698 / 74-OR23-1A / CBS 708.71 / DSM 1257 / FGSC 987), this protein is Histone chaperone rtt-106 (rtt-106).